Reading from the N-terminus, the 199-residue chain is AICSLVLYLLTLMLMEKLSSNSVDAQEVELVWTILPAIVLILLALPSLQILYMMDEIDEPDLTLKAIGHQWYWTYEYTDFKDLSFDSYMIPTSELPLGHFRLLEVDHRVVVPMESPIRVIITAGDVLHSWAVPTLGVKTDAIPGRLNQTSFITTRPGIFYGQCSEICGANHSYMPIVVESTPLPHFENWSSLLSTSSSL.

The helical transmembrane segment at 1–13 threads the bilayer; the sequence is AICSLVLYLLTLM. Over 14 to 26 the chain is Mitochondrial matrix; the sequence is LMEKLSSNSVDAQ. A helical membrane pass occupies residues 27 to 54; it reads EVELVWTILPAIVLILLALPSLQILYMM. The Mitochondrial intermembrane segment spans residues 55–199; the sequence is DEIDEPDLTL…SSLLSTSSSL (145 aa). The Cu cation site is built by His128, Cys163, Glu165, Cys167, His171, and Met174. A Mg(2+)-binding site is contributed by Glu165.

It belongs to the cytochrome c oxidase subunit 2 family. Component of the cytochrome c oxidase (complex IV, CIV), a multisubunit enzyme composed of 14 subunits. The complex is composed of a catalytic core of 3 subunits MT-CO1, MT-CO2 and MT-CO3, encoded in the mitochondrial DNA, and 11 supernumerary subunits COX4I, COX5A, COX5B, COX6A, COX6B, COX6C, COX7A, COX7B, COX7C, COX8 and NDUFA4, which are encoded in the nuclear genome. The complex exists as a monomer or a dimer and forms supercomplexes (SCs) in the inner mitochondrial membrane with NADH-ubiquinone oxidoreductase (complex I, CI) and ubiquinol-cytochrome c oxidoreductase (cytochrome b-c1 complex, complex III, CIII), resulting in different assemblies (supercomplex SCI(1)III(2)IV(1) and megacomplex MCI(2)III(2)IV(2)). Found in a complex with TMEM177, COA6, COX18, COX20, SCO1 and SCO2. Interacts with TMEM177 in a COX20-dependent manner. Interacts with COX20. Interacts with COX16. It depends on Cu cation as a cofactor.

Its subcellular location is the mitochondrion inner membrane. It catalyses the reaction 4 Fe(II)-[cytochrome c] + O2 + 8 H(+)(in) = 4 Fe(III)-[cytochrome c] + 2 H2O + 4 H(+)(out). Its function is as follows. Component of the cytochrome c oxidase, the last enzyme in the mitochondrial electron transport chain which drives oxidative phosphorylation. The respiratory chain contains 3 multisubunit complexes succinate dehydrogenase (complex II, CII), ubiquinol-cytochrome c oxidoreductase (cytochrome b-c1 complex, complex III, CIII) and cytochrome c oxidase (complex IV, CIV), that cooperate to transfer electrons derived from NADH and succinate to molecular oxygen, creating an electrochemical gradient over the inner membrane that drives transmembrane transport and the ATP synthase. Cytochrome c oxidase is the component of the respiratory chain that catalyzes the reduction of oxygen to water. Electrons originating from reduced cytochrome c in the intermembrane space (IMS) are transferred via the dinuclear copper A center (CU(A)) of subunit 2 and heme A of subunit 1 to the active site in subunit 1, a binuclear center (BNC) formed by heme A3 and copper B (CU(B)). The BNC reduces molecular oxygen to 2 water molecules using 4 electrons from cytochrome c in the IMS and 4 protons from the mitochondrial matrix. This is Cytochrome c oxidase subunit 2 (MT-CO2) from Apteryx australis (Southern brown kiwi).